The chain runs to 301 residues: uncharacterized protein (301 aa).

Residues S44 and Y107 each act as charge relay system in the active site. Y133 functions as the Proton donor in the catalytic mechanism. K162 serves as the catalytic Schiff-base intermediate with substrate.

It belongs to the DapA family. In terms of assembly, homotetramer.

It localises to the cytoplasm. This is an uncharacterized protein from Pyrobaculum aerophilum (strain ATCC 51768 / DSM 7523 / JCM 9630 / CIP 104966 / NBRC 100827 / IM2).